Reading from the N-terminus, the 172-residue chain is Translation initiation factor IF-3 (172 aa).

This sequence belongs to the IF-3 family. In terms of assembly, monomer.

Its subcellular location is the cytoplasm. IF-3 binds to the 30S ribosomal subunit and shifts the equilibrium between 70S ribosomes and their 50S and 30S subunits in favor of the free subunits, thus enhancing the availability of 30S subunits on which protein synthesis initiation begins. In Campylobacter jejuni subsp. jejuni serotype O:6 (strain 81116 / NCTC 11828), this protein is Translation initiation factor IF-3.